The sequence spans 76 residues: cAMP-dependent protein kinase inhibitor alpha (76 aa).

Position 2 is a blocked amino end (Thr) (Thr-2). Positions 49-76 (KAEGEGDAQRNPSEQTGEAQGEAAKQES) are disordered.

It belongs to the PKI family.

Extremely potent competitive inhibitor of cAMP-dependent protein kinase activity, this protein interacts with the catalytic subunit of the enzyme after the cAMP-induced dissociation of its regulatory chains. The protein is cAMP-dependent protein kinase inhibitor alpha (PKIA) of Gallus gallus (Chicken).